We begin with the raw amino-acid sequence, 265 residues long: UPF0354 protein GWCH70_2742 (265 aa).

This sequence belongs to the UPF0354 family.

This Geobacillus sp. (strain WCH70) protein is UPF0354 protein GWCH70_2742.